The primary structure comprises 90 residues: Probable Fe(2+)-trafficking protein (90 aa).

This sequence belongs to the Fe(2+)-trafficking protein family. As to quaternary structure, monomer.

In terms of biological role, could be a mediator in iron transactions between iron acquisition and iron-requiring processes, such as synthesis and/or repair of Fe-S clusters in biosynthetic enzymes. This is Probable Fe(2+)-trafficking protein from Yersinia enterocolitica serotype O:8 / biotype 1B (strain NCTC 13174 / 8081).